The following is a 494-amino-acid chain: Chromosomal replication initiator protein DnaA (494 aa).

A domain I, interacts with DnaA modulators region spans residues 1–103 (MTNIGGPVVE…LRVEVIVRGM (103 aa)). A domain II region spans residues 103 to 148 (MKRVSKGVVCRTSAAPVVLEGQTASSFVESYTEPSVKDIEAGVFGS). The tract at residues 149–371 (PLDSRYTFES…GAFNQLLFRQ (223 aa)) is domain III, AAA+ region. ATP contacts are provided by Gly-195, Gly-197, Lys-198, and Thr-199. The interval 372 to 494 (SFESDLSLER…LKRLIGEQAA (123 aa)) is domain IV, binds dsDNA.

It belongs to the DnaA family. As to quaternary structure, oligomerizes as a right-handed, spiral filament on DNA at oriC.

It localises to the cytoplasm. In terms of biological role, plays an essential role in the initiation and regulation of chromosomal replication. ATP-DnaA binds to the origin of replication (oriC) to initiate formation of the DNA replication initiation complex once per cell cycle. Binds the DnaA box (a 9 base pair repeat at the origin) and separates the double-stranded (ds)DNA. Forms a right-handed helical filament on oriC DNA; dsDNA binds to the exterior of the filament while single-stranded (ss)DNA is stabiized in the filament's interior. The ATP-DnaA-oriC complex binds and stabilizes one strand of the AT-rich DNA unwinding element (DUE), permitting loading of DNA polymerase. After initiation quickly degrades to an ADP-DnaA complex that is not apt for DNA replication. Binds acidic phospholipids. This Bartonella quintana (strain Toulouse) (Rochalimaea quintana) protein is Chromosomal replication initiator protein DnaA.